Reading from the N-terminus, the 175-residue chain is MAIREIIILPDKQLRLVSRPIETVTPEIRKLADDMFETMYDAPGIGLAGIQIAQPLRIITMDLARRDEEGELTPRPRIFINPEILSASEELSTYEEGCLSIPEYYEEVERPARVRVRFTDLDGKVHEEDAEGIYATCIQHEIDHLNGVLFVDHISKLKRDRVVKKFTKAAKLAAK.

The Fe cation site is built by cysteine 98 and histidine 140. Glutamate 141 is an active-site residue. Histidine 144 is a Fe cation binding site.

Belongs to the polypeptide deformylase family. It depends on Fe(2+) as a cofactor.

It carries out the reaction N-terminal N-formyl-L-methionyl-[peptide] + H2O = N-terminal L-methionyl-[peptide] + formate. Its function is as follows. Removes the formyl group from the N-terminal Met of newly synthesized proteins. Requires at least a dipeptide for an efficient rate of reaction. N-terminal L-methionine is a prerequisite for activity but the enzyme has broad specificity at other positions. The chain is Peptide deformylase from Nitrobacter hamburgensis (strain DSM 10229 / NCIMB 13809 / X14).